Consider the following 410-residue polypeptide: WD repeat and FYVE domain-containing protein 1 (410 aa).

WD repeat units follow at residues 22-61 (GHQDAVTAALLIPKEDGVITASEDRTIRVWLKRDSGQYWP), 66-105 (TMASPCSAMAYHHDSRRIFVGQDNGAVMEFHVSEDFNKMN), 112-150 (AHQNRVTAIIFSLATEWVISTGHDKCVSWMCTRSGNMLG), 153-192 (FFSSWASCLQYDFDTQYAFVGDYSGQITLLKLEQSTCSVI), 197-236 (GHEGSIACLWWDPIQRLLFSGASDNSVIMWDIGGRKGRTL), and 240-279 (GHHDRVQALCYLQLTRQLVSCSSDGGIAVWNMDVSREEAP). The segment at 281–352 (WLESDSCQKC…VCDSCYDSIK (72 aa)) adopts an FYVE-type zinc-finger fold. Residues cysteine 287, cysteine 290, cysteine 314, cysteine 317, cysteine 322, cysteine 325, cysteine 344, and cysteine 347 each coordinate Zn(2+). The stretch at 364 to 403 (EGKHNISHMSMDVARGLMVTCGTDRVVKIWDMTPVVGCSL) is one WD 7 repeat. Phosphoserine is present on serine 408.

Binds PtdIns3P in vitro with high specificity over other phosphoinositides. Interacts (via WD repeat 2) with tyrosine-phosphorylated TLR3 (via TIR domain) in response to poly(I:C). Interacts with TLR4 in response to LPS. Interacts with TICAM1 in response to poly(I:C).

It localises to the early endosome. In terms of biological role, positively regulates TLR3- and TLR4-mediated signaling pathways by bridging the interaction between TLR3 or TLR4 and TICAM1. Promotes TLR3/4 ligand-induced activation of transcription factors IRF3 and NF-kappa-B, as well as the production of IFN-beta and inflammatory cytokines. The chain is WD repeat and FYVE domain-containing protein 1 (WDFY1) from Bos taurus (Bovine).